Here is a 94-residue protein sequence, read N- to C-terminus: Pyrimidine/purine nucleoside phosphorylase (94 aa).

The protein belongs to the nucleoside phosphorylase PpnP family.

The catalysed reaction is a purine D-ribonucleoside + phosphate = a purine nucleobase + alpha-D-ribose 1-phosphate. The enzyme catalyses adenosine + phosphate = alpha-D-ribose 1-phosphate + adenine. It catalyses the reaction cytidine + phosphate = cytosine + alpha-D-ribose 1-phosphate. It carries out the reaction guanosine + phosphate = alpha-D-ribose 1-phosphate + guanine. The catalysed reaction is inosine + phosphate = alpha-D-ribose 1-phosphate + hypoxanthine. The enzyme catalyses thymidine + phosphate = 2-deoxy-alpha-D-ribose 1-phosphate + thymine. It catalyses the reaction uridine + phosphate = alpha-D-ribose 1-phosphate + uracil. It carries out the reaction xanthosine + phosphate = alpha-D-ribose 1-phosphate + xanthine. Functionally, catalyzes the phosphorolysis of diverse nucleosides, yielding D-ribose 1-phosphate and the respective free bases. Can use uridine, adenosine, guanosine, cytidine, thymidine, inosine and xanthosine as substrates. Also catalyzes the reverse reactions. The protein is Pyrimidine/purine nucleoside phosphorylase of Cronobacter sakazakii (strain ATCC BAA-894) (Enterobacter sakazakii).